A 562-amino-acid chain; its full sequence is DNA-binding protein MutS2 (562 aa).

380-387 lines the ATP pocket; the sequence is GANSGGKT.

It belongs to the DNA mismatch repair MutS family. Archaeal Muts2 subfamily. As to quaternary structure, multimer. It depends on Co(2+) as a cofactor. Mn(2+) is required as a cofactor.

Has ATPase and non-specific DNA-binding activities. May be involved in recombination and/or recombinational repair. Not involved in mismatch repair. The sequence is that of DNA-binding protein MutS2 from Pyrococcus furiosus (strain ATCC 43587 / DSM 3638 / JCM 8422 / Vc1).